We begin with the raw amino-acid sequence, 500 residues long: Probable cytosol aminopeptidase (500 aa).

Positions 265 and 270 each coordinate Mn(2+). Lys-277 is an active-site residue. The Mn(2+) site is built by Asp-288, Asp-347, and Glu-349. Residue Arg-351 is part of the active site.

The protein belongs to the peptidase M17 family. Mn(2+) serves as cofactor.

The protein resides in the cytoplasm. It carries out the reaction Release of an N-terminal amino acid, Xaa-|-Yaa-, in which Xaa is preferably Leu, but may be other amino acids including Pro although not Arg or Lys, and Yaa may be Pro. Amino acid amides and methyl esters are also readily hydrolyzed, but rates on arylamides are exceedingly low.. It catalyses the reaction Release of an N-terminal amino acid, preferentially leucine, but not glutamic or aspartic acids.. Functionally, presumably involved in the processing and regular turnover of intracellular proteins. Catalyzes the removal of unsubstituted N-terminal amino acids from various peptides. In Rickettsia massiliae (strain Mtu5), this protein is Probable cytosol aminopeptidase.